A 551-amino-acid chain; its full sequence is Tropolone cluster transcription factor tropK (551 aa).

The interval 1-21 (MSVAIKMSTNTVGGQSTRQPP) is disordered. Polar residues predominate over residues 7 to 20 (MSTNTVGGQSTRQP). The segment at residues 25-52 (CLHCRNKKMKCDALQPRCKNCFNAGVEC) is a DNA-binding region (zn(2)-C6 fungal-type).

It localises to the nucleus. Its function is as follows. Transcription factor that regulates the expression of the gene cluster that mediates the biosynthesis tropolone class of fungal maleic anhydrides, including stipitaldehydic, stipitatonic and stipitatic acids. This is Tropolone cluster transcription factor tropK from Talaromyces stipitatus (strain ATCC 10500 / CBS 375.48 / QM 6759 / NRRL 1006) (Penicillium stipitatum).